Here is a 126-residue protein sequence, read N- to C-terminus: Probable DNA-directed RNA polymerase II subunit RPB11 (126 aa).

This sequence belongs to the archaeal Rpo11/eukaryotic RPB11/RPC19 RNA polymerase subunit family. In terms of assembly, component of the RNA polymerase II (Pol II) complex consisting of 12 subunits.

The protein localises to the nucleus. Its function is as follows. DNA-dependent RNA polymerase catalyzes the transcription of DNA into RNA using the four ribonucleoside triphosphates as substrates. Component of RNA polymerase II which synthesizes mRNA precursors and many functional non-coding RNAs. Pol II is the central component of the basal RNA polymerase II transcription machinery. It is composed of mobile elements that move relative to each other. RPB11 is part of the core element with the central large cleft. The polypeptide is Probable DNA-directed RNA polymerase II subunit RPB11 (Plasmodium falciparum (isolate 3D7)).